The chain runs to 380 residues: 3-dehydroquinate synthase (380 aa).

Residues 68 to 73 (PGEPNK), 102 to 106 (GTVLD), 126 to 127 (TT), lysine 139, and lysine 148 each bind NAD(+). Zn(2+) contacts are provided by glutamate 181, histidine 243, and histidine 259.

It belongs to the sugar phosphate cyclases superfamily. Dehydroquinate synthase family. NAD(+) serves as cofactor. Co(2+) is required as a cofactor. It depends on Zn(2+) as a cofactor.

It localises to the cytoplasm. It carries out the reaction 7-phospho-2-dehydro-3-deoxy-D-arabino-heptonate = 3-dehydroquinate + phosphate. It participates in metabolic intermediate biosynthesis; chorismate biosynthesis; chorismate from D-erythrose 4-phosphate and phosphoenolpyruvate: step 2/7. Functionally, catalyzes the conversion of 3-deoxy-D-arabino-heptulosonate 7-phosphate (DAHP) to dehydroquinate (DHQ). This is 3-dehydroquinate synthase (aroB) from Chlamydia pneumoniae (Chlamydophila pneumoniae).